The primary structure comprises 1085 residues: Extracellular calcium-sensing receptor (1085 aa).

The first 19 residues, 1–19 (MALYSCCWILLAFSTWCTS), serve as a signal peptide directing secretion. Residues 20–611 (AYGPDQRAQK…KEIEFLSWTE (592 aa)) lie on the Extracellular side of the membrane. Residues 23–189 (PDQRAQKKGD…QFKSFLRTIP (167 aa)) form a ligand-binding 1 (LB1) region. A disulfide bridge links cysteine 61 with cysteine 102. Phosphate is bound at residue 67–71 (RGFRW). Ca(2+) contacts are provided by isoleucine 82, serine 85, leucine 88, and leucine 89. Asparagine 91 is a glycosylation site (N-linked (GlcNAc...) asparagine). Residue threonine 101 coordinates Ca(2+). Asparagine 131 carries N-linked (GlcNAc...) asparagine glycosylation. Threonine 146 is a Ca(2+) binding site. Residues serine 148, alanine 169, and serine 171 each contribute to the L-tryptophan site. Residues serine 171, proline 189, aspartate 191, glutamate 232, and aspartate 235 each coordinate Ca(2+). The tract at residues 190 to 325 (NDEHQATAMA…GGTIGFGLKA (136 aa)) is ligand-binding 2 (LB2). Disulfide bonds link cysteine 237–cysteine 562, cysteine 359–cysteine 396, cysteine 438–cysteine 450, cysteine 543–cysteine 563, cysteine 547–cysteine 566, cysteine 569–cysteine 583, and cysteine 586–cysteine 599. The spermine site is built by aspartate 239 and serine 241. N-linked (GlcNAc...) asparagine glycans are attached at residues asparagine 262 and asparagine 288. Position 298 (glutamate 298) interacts with Ca(2+). Residue glutamate 298 coordinates L-tryptophan. An N-linked (GlcNAc...) asparagine glycan is attached at asparagine 401. 416-418 (RIS) contributes to the phosphate binding site. N-linked (GlcNAc...) asparagine glycosylation is found at asparagine 447, asparagine 469, and asparagine 489. A Ca(2+)-binding site is contributed by tyrosine 490. An N-linked (GlcNAc...) asparagine glycan is attached at asparagine 542. The segment at 543 to 613 (CSRDCLAGTR…IEFLSWTEPF (71 aa)) is cysteine-rich (CR). Glycine 558 is a binding site for Ca(2+). N-linked (GlcNAc...) asparagine glycosylation is present at asparagine 595. The helical transmembrane segment at 612–637 (PFGIALTLFAVLGIFLTAFVLGVFIK) threads the bilayer. Residues 638-649 (FRNTPIVKATNR) lie on the Cytoplasmic side of the membrane. The segment at 638–649 (FRNTPIVKATNR) is intracellular loop 1 (ICL1). Residues 650-669 (ELSYLLLFSLLCCFSSSLFF) form a helical membrane-spanning segment. Residues 670 to 675 (IGEPQD) lie on the Extracellular side of the membrane. Residues 676-699 (WTCRLRQPAFGISFVLCISCILVK) traverse the membrane as a helical segment. Residues 700–723 (TNRVLLVFEAKIPTSFHRKWWGLN) are Cytoplasmic-facing. Residues 700–723 (TNRVLLVFEAKIPTSFHRKWWGLN) form an intracellular loop 2 (ICL2) region. A helical membrane pass occupies residues 724 to 746 (LQFLLVFLCTFMQIVICAIWLNT). Topologically, residues 747-770 (APPSSYRNHELEDEIIFITCHEGS) are extracellular. A helical membrane pass occupies residues 771–790 (LMALGFLIGYTCLLAAICFF). Over 791 to 806 (FAFKSRKLPENFNEAK) the chain is Cytoplasmic. The intracellular loop 3 (ICL3) stretch occupies residues 791 to 806 (FAFKSRKLPENFNEAK). Residues 807–829 (FITFSMLIFFIVWISFIPAYAST) form a helical membrane-spanning segment. At 830-833 (YGKF) the chain is on the extracellular side. A helical transmembrane segment spans residues 834–855 (VSAVEVIAILAASFGLLACIFF). The Cytoplasmic portion of the chain corresponds to 856-1085 (NKVYIILFKP…STVTENMLRS (230 aa)). The tract at residues 856–1085 (NKVYIILFKP…STVTENMLRS (230 aa)) is C-terminus. Residues 881 to 901 (AFKVAARATLRRSNVSRQRSS) are interaction with RNF19A. Phosphothreonine is present on threonine 889. The segment at 891–899 (RRSNVSRQR) is arginine-rich retention motif. A phosphoserine mark is found at serine 893, serine 900, and serine 921. A compositionally biased stretch (low complexity) spans 893–938 (SNVSRQRSSSLGGSTGSTPSSSISSKSNSEDPFPQQQPKRQKQPQP). 2 disordered regions span residues 893 to 969 (SNVS…PPRC) and 1034 to 1058 (SQET…EEMS). A compositionally biased stretch (pro residues) spans 950 to 960 (QPRPPSTPQPQ). The residue at position 1068 (serine 1068) is a Phosphoserine.

This sequence belongs to the G-protein coupled receptor 3 family. In terms of assembly, homodimer; disulfide-linked. Interacts with VCP. Interacts with ARRB1. Post-translationally, phosphorylation at Thr-889 by PKC impairs coupling with G(q)/G(11) G-proteins, while it does not affect G(i)/G(o)-coupling. Phosphorylation at Ser-893 by PKC and Ser-900 by PKA promote plasma membrane localization. In terms of processing, ubiquitinated by RNF19A; which induces proteasomal degradation.

The protein localises to the cell membrane. In resting state, adopts an open conformation, anion-binding promoting the inactive configuration. Upon aromatic amino acid-binding, the groove in the extracellular venus flytrap module is closed, thereby inducing the formation of a novel homodimer interface between subunits. Calcium ions stabilize the active state by enhancing homodimer interactions between membrane-proximal domains to fully activate the receptor. Upon activation, the homodimer adopts an asymmetric configuration of the 7-transmembrane region that primes one protomer for G-protein coupling. G-protein binding expands the transmembrane dimer interface; the restriction imposed by the receptor dimer, in combination with intracellular loop 2 (ICL2), enables G-protein activation by facilitating conformational transition of G-protein alpha. Coupling to different classes of G-proteins results in distinct CASR-G-protein interfaces. Its function is as follows. G-protein-coupled receptor that senses changes in the extracellular concentration of calcium ions and plays a key role in maintaining calcium homeostasis. Senses fluctuations in the circulating calcium concentration: activated by elevated circulating calcium, leading to decreased parathyroid hormone (PTH) secretion in parathyroid glands. In kidneys, acts as a key regulator of renal tubular calcium resorption. Ligand binding causes a conformation change that triggers signaling via guanine nucleotide-binding proteins (G-proteins) and modulates the activity of downstream effectors. CASR is coupled with different G(q)/G(11), G(i)/G(o)- or G(s)-classes of G-proteins depending on the context. In the parathyroid and kidney, CASR signals through G(q)/G(11) and G(i)/G(o) G-proteins: G(q)/G(11) coupling activates phospholipase C-beta, releasing diacylglycerol (DAG) and inositol 1,4,5-trisphosphate (IP3) second messengers, while G(i)/G(o) coupling mediates inhibition of adenylate cyclase activity. The G-protein-coupled receptor activity is activated by a co-agonist mechanism: aromatic amino acids, such as Trp or Phe, act concertedly with divalent cations, such as calcium or magnesium, to achieve full receptor activation. Acts as an activator of the NLRP3 inflammasome via G(i)/G(o)-mediated signaling: down-regulation of cyclic AMP (cAMP) relieving NLRP3 inhibition by cAMP. Acts as a regulator of proton-sensing receptor GPR68 in a seesaw manner: CASR-mediated signaling inhibits GPR68 signaling in response to extracellular calcium, while GPR68 inhibits CASR in presence of extracellular protons. The protein is Extracellular calcium-sensing receptor (CASR) of Bos taurus (Bovine).